The primary structure comprises 379 residues: Alanine racemase (379 aa).

Catalysis depends on lysine 37, which acts as the Proton acceptor; specific for D-alanine. N6-(pyridoxal phosphate)lysine is present on lysine 37. Arginine 139 contacts substrate. Tyrosine 266 functions as the Proton acceptor; specific for L-alanine in the catalytic mechanism. Residue methionine 314 coordinates substrate.

This sequence belongs to the alanine racemase family. Pyridoxal 5'-phosphate serves as cofactor.

The enzyme catalyses L-alanine = D-alanine. It participates in amino-acid biosynthesis; D-alanine biosynthesis; D-alanine from L-alanine: step 1/1. Catalyzes the interconversion of L-alanine and D-alanine. May also act on other amino acids. The polypeptide is Alanine racemase (alr) (Sorangium cellulosum (strain So ce56) (Polyangium cellulosum (strain So ce56))).